A 382-amino-acid chain; its full sequence is Putative NADPH dehydrogenase C5H10.04 (382 aa).

FMN is bound by residues T28 and H189. Positions 189 and 192 each coordinate substrate. Residues R242 and R334 each coordinate FMN. Y361 provides a ligand contact to substrate.

It belongs to the NADH:flavin oxidoreductase/NADH oxidase family. Homodimer or heterodimer. FMN serves as cofactor.

It catalyses the reaction A + NADPH + H(+) = AH2 + NADP(+). The polypeptide is Putative NADPH dehydrogenase C5H10.04 (Schizosaccharomyces pombe (strain 972 / ATCC 24843) (Fission yeast)).